Consider the following 486-residue polypeptide: Protein DETOXIFICATION 16 (486 aa).

12 helical membrane passes run glycine 35–valine 55, isoleucine 68–leucine 88, leucine 117–glycine 137, isoleucine 142–leucine 162, valine 179–phenylalanine 199, glycine 207–valine 227, alanine 259–leucine 279, valine 288–glycine 308, arginine 331–isoleucine 351, valine 365–leucine 385, isoleucine 401–leucine 421, and tryptophan 433–phenylalanine 453.

Belongs to the multi antimicrobial extrusion (MATE) (TC 2.A.66.1) family.

It is found in the membrane. The protein is Protein DETOXIFICATION 16 of Arabidopsis thaliana (Mouse-ear cress).